A 714-amino-acid chain; its full sequence is Fatty acid oxidation complex subunit alpha (714 aa).

The segment at M1–P190 is enoyl-CoA hydratase. Residues A306–Q714 are 3-hydroxyacyl-CoA dehydrogenase.

It in the N-terminal section; belongs to the enoyl-CoA hydratase/isomerase family. In the central section; belongs to the 3-hydroxyacyl-CoA dehydrogenase family. In terms of assembly, heterotetramer of two alpha chains (FadJ) and two beta chains (FadI).

It is found in the cytoplasm. The catalysed reaction is a (3S)-3-hydroxyacyl-CoA = a (2E)-enoyl-CoA + H2O. It carries out the reaction a 4-saturated-(3S)-3-hydroxyacyl-CoA = a (3E)-enoyl-CoA + H2O. It catalyses the reaction a (3S)-3-hydroxyacyl-CoA + NAD(+) = a 3-oxoacyl-CoA + NADH + H(+). The enzyme catalyses (3S)-3-hydroxybutanoyl-CoA = (3R)-3-hydroxybutanoyl-CoA. The protein operates within lipid metabolism; fatty acid beta-oxidation. Catalyzes the formation of a hydroxyacyl-CoA by addition of water on enoyl-CoA. Also exhibits 3-hydroxyacyl-CoA epimerase and 3-hydroxyacyl-CoA dehydrogenase activities. The protein is Fatty acid oxidation complex subunit alpha of Escherichia coli (strain SE11).